A 127-amino-acid chain; its full sequence is MPQGLALYCFIAAGGATGACLRYFVTTSVDSLFGKHMPFGTLTVNVVGSFALALLYGVIERYDLSDSPYRALIGVGLLGAFTTFSTFSVETLTLLENELWLKAAANVFLNVGACLLAGWLAIELMKG.

Helical transmembrane passes span 1–21, 39–59, 72–92, and 105–125; these read MPQG…GACL, FGTL…YGVI, LIGV…VETL, and ANVF…IELM. Na(+)-binding residues include Gly79 and Thr82.

It belongs to the fluoride channel Fluc/FEX (TC 1.A.43) family.

Its subcellular location is the cell inner membrane. It catalyses the reaction fluoride(in) = fluoride(out). With respect to regulation, na(+) is not transported, but it plays an essential structural role and its presence is essential for fluoride channel function. Its function is as follows. Fluoride-specific ion channel. Important for reducing fluoride concentration in the cell, thus reducing its toxicity. In Alteromonas mediterranea (strain DSM 17117 / CIP 110805 / LMG 28347 / Deep ecotype), this protein is Fluoride-specific ion channel FluC.